Consider the following 506-residue polypeptide: MTQAVMLQGTASDVGKSVLAAGLCRIFYQDGLRTAPFKSQNMALNSGITPDGKEMGRAQIFQAEAAGIMPDVRMNPVLLKPTSDRQAQIVLMGKVATNMDAVSYHDYKPRLREQILAVYNSLAREYDVIVLEGAGSPAEINLRDRDIVNMGMAEMAQCPVILVADIDRGGVFAAIYGTLALLHKQERDRVKGVIINKFRGDVALLYSGIEQIESLTGVPVLGVMPWLDVDLEDEDGVTLQNGKYKGNDDRDITIAIVQLPHISNFTDFNALAAQPDVRIRYVRRPEELADVDLAILPGSKNTLSDLAWLRESGMADAVLQTHRQGVPVMGICGGYQMLGDTIVDEVESGLGTQPGLGLLNTITRFAQDKTTTQVNATMSGELPGWLAAAAGLPVRGYEIHMGETVLQEGCCTAMTLQKNGCPVADGAVTADGLAFGTYLHGLFDSDAFTRAVVNGLRARKGLAPWETTFCYAEHKARQFDLLAEAMRQHIDIDKIYTIMQQHQEPV.

The 198-residue stretch at 251 to 448 (DITIAIVQLP…LHGLFDSDAF (198 aa)) folds into the GATase cobBQ-type domain. Cys-332 serves as the catalytic Nucleophile. His-440 is a catalytic residue.

The protein belongs to the CobB/CobQ family. CobQ subfamily.

The protein operates within cofactor biosynthesis; adenosylcobalamin biosynthesis. Catalyzes amidations at positions B, D, E, and G on adenosylcobyrinic A,C-diamide. NH(2) groups are provided by glutamine, and one molecule of ATP is hydrogenolyzed for each amidation. The polypeptide is Cobyric acid synthase (Salmonella arizonae (strain ATCC BAA-731 / CDC346-86 / RSK2980)).